Reading from the N-terminus, the 262-residue chain is ATP synthase subunit a (262 aa).

Transmembrane regions (helical) follow at residues 26-46 (VHID…FVFS), 86-106 (VAPL…IDLI), 130-150 (DISA…FYTI), 204-226 (LIFI…GIPL), and 240-260 (LQAF…YNKA).

It belongs to the ATPase A chain family. As to quaternary structure, F-type ATPases have 2 components, CF(1) - the catalytic core - and CF(0) - the membrane proton channel. CF(1) has five subunits: alpha(3), beta(3), gamma(1), delta(1), epsilon(1). CF(0) has three main subunits: a(1), b(2) and c(9-12). The alpha and beta chains form an alternating ring which encloses part of the gamma chain. CF(1) is attached to CF(0) by a central stalk formed by the gamma and epsilon chains, while a peripheral stalk is formed by the delta and b chains.

The protein resides in the cell inner membrane. In terms of biological role, key component of the proton channel; it plays a direct role in the translocation of protons across the membrane. The polypeptide is ATP synthase subunit a (Haemophilus influenzae (strain 86-028NP)).